Here is a 585-residue protein sequence, read N- to C-terminus: MAPMSIADLVAALPAEDTWGPATPSDNMLDGVPYAPFSKGDKLGRMADWTGDGKDRDRSGRQAYNRNYRDQQVYGAGTSSLFNIQVAEDESSFSVVDNTRTSTKRTFARGGGTVFRGRGQRGVGQRGGRAGFQRVGAGRGQGGDRYYDNRSARSNRGRRFGWKDYDKPQRTREPSVNVRPDWTMLEEVDFNRLSKLNLEAPEGEDLDSYGFLYYYDRSYDKAPVKNAERKLQALERAAYNVTTSQDPVIQELAEKNEATVFATSDILSMLMCAPRSVYSWDIVIVHQGDKIYFDKREGASIDLVTVNENAADAPVETADSSGKQESINTPSALALEATFINHNFALQTVVESEESKVTFNHPNPFYNAAEETEPLASKGYKYRRFDLSLQDDEEPLNMIVRTEVDAVMKNPVGGEDQHLIVKALNEFDSKAPGSGGALDWRSKLWSQRGAVVATEMKNNSIKLARWTTQAILAKADAMKLGFVSRANPRSATSHVILGVVGYKPREFAAQMNLNLGNGWGIVRTIVDRIRALDAEEEEDKVKKYVLIKDPNRPVIRLYSVPPNTFEEDDEAAEEQEEKAEDESEE.

Gly residues predominate over residues 110–130; it reads GGGTVFRGRGQRGVGQRGGRA. The disordered stretch occupies residues 110–152; that stretch reads GGGTVFRGRGQRGVGQRGGRAGFQRVGAGRGQGGDRYYDNRSA. Positions 300–314 are RNA gate; it reads SIDLVTVNENAADAP. Residues 560–585 form a disordered region; the sequence is VPPNTFEEDDEAAEEQEEKAEDESEE. Positions 565–585 are enriched in acidic residues; sequence FEEDDEAAEEQEEKAEDESEE.

This sequence belongs to the eIF-3 subunit D family. As to quaternary structure, component of the eukaryotic translation initiation factor 3 (eIF-3) complex.

It is found in the cytoplasm. MRNA cap-binding component of the eukaryotic translation initiation factor 3 (eIF-3) complex, which is involved in protein synthesis of a specialized repertoire of mRNAs and, together with other initiation factors, stimulates binding of mRNA and methionyl-tRNAi to the 40S ribosome. The eIF-3 complex specifically targets and initiates translation of a subset of mRNAs involved in cell proliferation. In the eIF-3 complex, eif3d specifically recognizes and binds the 7-methylguanosine cap of a subset of mRNAs. This Aspergillus fumigatus (strain CBS 144.89 / FGSC A1163 / CEA10) (Neosartorya fumigata) protein is Eukaryotic translation initiation factor 3 subunit D.